The sequence spans 311 residues: Ribosomal RNA small subunit methyltransferase H (311 aa).

Residues 34–36 (GGH), Asp-54, Phe-78, Asp-100, and Gln-107 each bind S-adenosyl-L-methionine.

It belongs to the methyltransferase superfamily. RsmH family.

Its subcellular location is the cytoplasm. It catalyses the reaction cytidine(1402) in 16S rRNA + S-adenosyl-L-methionine = N(4)-methylcytidine(1402) in 16S rRNA + S-adenosyl-L-homocysteine + H(+). Specifically methylates the N4 position of cytidine in position 1402 (C1402) of 16S rRNA. The protein is Ribosomal RNA small subunit methyltransferase H of Hamiltonella defensa subsp. Acyrthosiphon pisum (strain 5AT).